The following is a 515-amino-acid chain: Glucose-6-phosphate 1-dehydrogenase (515 aa).

N-acetylalanine is present on A2. S8 bears the Phosphoserine mark. T10 bears the Phosphothreonine mark. NADP(+) is bound at residue 38–45 (GASGDLAK). The residue at position 89 (K89) is an N6-acetyllysine. NADP(+)-binding residues include Y147 and K171. D-glucose 6-phosphate-binding positions include K171, 201 to 205 (HYLGK), E239, and E258. K171 carries the post-translational modification N6-(2-hydroxyisobutyryl)lysine; alternate. K171 carries the N6-acetyllysine; alternate modification. R357 is an NADP(+) binding site. D-glucose 6-phosphate contacts are provided by K360 and R365. K366, R370, and R393 together coordinate NADP(+). Q395 provides a ligand contact to D-glucose 6-phosphate. Residues 401 to 403 (YTK) and 421 to 423 (DLT) each bind NADP(+). K403 is subject to N6-acetyllysine. Position 432 is an N6-acetyllysine (K432). Residue R487 coordinates NADP(+). N6-acetyllysine is present on K497. The NADP(+) site is built by Y503 and W509. Y503 is modified (phosphotyrosine).

Belongs to the glucose-6-phosphate dehydrogenase family. As to quaternary structure, homotetramer; dimer of dimers. Interacts with SIRT2; the interaction is enhanced by H(2)O(2) treatment. Forms a ternary complex with ALDOB and TP53; this interaction is direct. ALDOB stabilizes the complex inhibiting G6PD activity and keeping oxidative pentose phosphate metabolism in check. In terms of processing, acetylated by ELP3 at Lys-403; acetylation inhibits its homodimerization and enzyme activity. Deacetylated by SIRT2 at Lys-403; deacetylation stimulates its enzyme activity.

Its subcellular location is the cytoplasm. The protein resides in the cytosol. It localises to the membrane. It catalyses the reaction D-glucose 6-phosphate + NADP(+) = 6-phospho-D-glucono-1,5-lactone + NADPH + H(+). Its pathway is carbohydrate degradation; pentose phosphate pathway; D-ribulose 5-phosphate from D-glucose 6-phosphate (oxidative stage): step 1/3. In terms of biological role, cytosolic glucose-6-phosphate dehydrogenase that catalyzes the first and rate-limiting step of the oxidative branch within the pentose phosphate pathway/shunt, an alternative route to glycolysis for the dissimilation of carbohydrates and a major source of reducing power and metabolic intermediates for fatty acid and nucleic acid biosynthetic processes. The polypeptide is Glucose-6-phosphate 1-dehydrogenase (G6PD) (Bos indicus (Zebu)).